Reading from the N-terminus, the 577-residue chain is Anthranilate synthase alpha subunit 1, chloroplastic (577 aa).

The N-terminal 34 residues, 1–34 (MASLVLSLRIAPSTPPLGLGGGRFRGRRGAVACR), are a transit peptide targeting the chloroplast.

This sequence belongs to the anthranilate synthase component I family. Heterotetramer consisting of two non-identical subunits: a beta subunit and a large alpha subunit.

It is found in the plastid. The protein localises to the chloroplast. The enzyme catalyses chorismate + L-glutamine = anthranilate + pyruvate + L-glutamate + H(+). Its pathway is amino-acid biosynthesis; L-tryptophan biosynthesis; L-tryptophan from chorismate: step 1/5. Its activity is regulated as follows. Feedback inhibition by tryptophan. In terms of biological role, part of a heterotetrameric complex that catalyzes the two-step biosynthesis of anthranilate, an intermediate in the biosynthesis of L-tryptophan. In the first step, the glutamine-binding beta subunit of anthranilate synthase (AS) provides the glutamine amidotransferase activity which generates ammonia as a substrate that, along with chorismate, is used in the second step, catalyzed by the large alpha subunit of AS to produce anthranilate. The chain is Anthranilate synthase alpha subunit 1, chloroplastic (ASA1) from Oryza sativa subsp. indica (Rice).